The chain runs to 707 residues: Mitochondrial disaggregase (707 aa).

Residues 1-36 (MLGSLVLRRKALAPRLLLRLLRSPTLRGHGGASGRN) constitute a mitochondrion transit peptide. Residues 92–126 (PGPEETLPGQDSWNGVPSRAGLGMCALAAALVVHC) form an autoinhibitory region. 4 ANK repeats span residues 133 to 162 (NKDAALLEAARANNMQEVSRLLSEGADVNA), 166 to 195 (LGWTALMVAAINRNNSVVQVLLAAGADPNL), 265 to 295 (KGCTALHYAVLADDYRTVKELLDGGANPLQR), and 298 to 327 (MGHTPLDYAREGEVMKLLRTSEAKYQEKQR). H346, I348, S383, G384, I385, G386, K387, T388, E455, and N496 together coordinate ATP. Residues 507–535 (LQLRQEALEMSRNRIAENLGDVQISDKIT) are regulatory; slows ATPase and disaggregase activities. R561 contacts ATP. K589 is modified (N6-acetyllysine). R620 provides a ligand contact to ATP.

Belongs to the ClpA/ClpB family. Homododecamer when substrate-bound; the homododecamer consists of 2 homohexamers stacked head-to-head via ANK repeat-mediated interactions. The active substrate-bound form is likely to exist in a dynamic equilibrium between homohexamers and homododecamers. Homotetradecamer in the unbound state which is remodeled upon substrate binding into the homododecamer. Interacts with PHB and PHB2. Interacts with MAVS; the interaction is enhanced by Sendai virus infection. Proteolytically cleaved by protease PARL. ATP-dependent protein disaggregase activity is stimulated by PARL-mediated cleavage of the N-terminal autoinhibitory peptide. In terms of tissue distribution, widely expressed (at protein level). Expressed in fetal, as well as in adult tissues, with highest levels in adult brain, including thalamus, hippocampus, occipital cortex and parietal cortex. Low expression in granulocytes.

It is found in the mitochondrion intermembrane space. It carries out the reaction ATP + H2O = ADP + phosphate + H(+). With respect to regulation, disaggregase activity is inhibited by ADP. Functions as a regulatory ATPase and participates in secretion/protein trafficking process. Has ATP-dependent protein disaggregase activity and is required to maintain the solubility of key mitochondrial proteins. Involved in mitochondrial-mediated antiviral innate immunity, activates RIG-I-mediated signal transduction and production of IFNB1 and pro-inflammatory cytokine IL6. Plays a role in granulocyte differentiation. The chain is Mitochondrial disaggregase from Homo sapiens (Human).